The following is a 64-amino-acid chain: Conotoxin Cal12.4 (64 aa).

A signal peptide spans 1-21; that stretch reads MKLTCMLVVLLLVLPFGDLIA.

It belongs to the conotoxin O1 superfamily. Post-translationally, contains 4 disulfide bonds. In terms of tissue distribution, expressed by the venom duct.

It localises to the secreted. Probable neurotoxin. In Californiconus californicus (California cone), this protein is Conotoxin Cal12.4.